Consider the following 201-residue polypeptide: Imidazoleglycerol-phosphate dehydratase (201 aa).

It belongs to the imidazoleglycerol-phosphate dehydratase family.

It is found in the cytoplasm. The catalysed reaction is D-erythro-1-(imidazol-4-yl)glycerol 3-phosphate = 3-(imidazol-4-yl)-2-oxopropyl phosphate + H2O. It functions in the pathway amino-acid biosynthesis; L-histidine biosynthesis; L-histidine from 5-phospho-alpha-D-ribose 1-diphosphate: step 6/9. This Prochlorococcus marinus (strain MIT 9515) protein is Imidazoleglycerol-phosphate dehydratase.